Consider the following 158-residue polypeptide: Cyclic pyranopterin monophosphate synthase (158 aa).

Residues 75-77 (LCH) and 113-114 (ME) contribute to the substrate site. Residue Asp-128 is part of the active site.

This sequence belongs to the MoaC family. As to quaternary structure, homohexamer; trimer of dimers.

It catalyses the reaction (8S)-3',8-cyclo-7,8-dihydroguanosine 5'-triphosphate = cyclic pyranopterin phosphate + diphosphate. The protein operates within cofactor biosynthesis; molybdopterin biosynthesis. Functionally, catalyzes the conversion of (8S)-3',8-cyclo-7,8-dihydroguanosine 5'-triphosphate to cyclic pyranopterin monophosphate (cPMP). The protein is Cyclic pyranopterin monophosphate synthase of Vibrio campbellii (strain ATCC BAA-1116).